The sequence spans 231 residues: Probable methylthioribulose-1-phosphate dehydratase (231 aa).

Cys90 contributes to the substrate binding site. 2 residues coordinate Zn(2+): His108 and His110. Glu132 (proton donor/acceptor) is an active-site residue. His188 contributes to the Zn(2+) binding site.

The protein belongs to the aldolase class II family. MtnB subfamily. Requires Zn(2+) as cofactor.

It is found in the cytoplasm. It carries out the reaction 5-(methylsulfanyl)-D-ribulose 1-phosphate = 5-methylsulfanyl-2,3-dioxopentyl phosphate + H2O. The protein operates within amino-acid biosynthesis; L-methionine biosynthesis via salvage pathway; L-methionine from S-methyl-5-thio-alpha-D-ribose 1-phosphate: step 2/6. Catalyzes the dehydration of methylthioribulose-1-phosphate (MTRu-1-P) into 2,3-diketo-5-methylthiopentyl-1-phosphate (DK-MTP-1-P). The polypeptide is Probable methylthioribulose-1-phosphate dehydratase (Anopheles gambiae (African malaria mosquito)).